The primary structure comprises 492 residues: N-succinylglutamate 5-semialdehyde dehydrogenase (492 aa).

220–225 (GSANTG) lines the NAD(+) pocket. Residues E243 and C277 contribute to the active site.

It belongs to the aldehyde dehydrogenase family. AstD subfamily.

It carries out the reaction N-succinyl-L-glutamate 5-semialdehyde + NAD(+) + H2O = N-succinyl-L-glutamate + NADH + 2 H(+). It participates in amino-acid degradation; L-arginine degradation via AST pathway; L-glutamate and succinate from L-arginine: step 4/5. Its function is as follows. Catalyzes the NAD-dependent reduction of succinylglutamate semialdehyde into succinylglutamate. The protein is N-succinylglutamate 5-semialdehyde dehydrogenase of Escherichia coli O127:H6 (strain E2348/69 / EPEC).